A 907-amino-acid chain; its full sequence is Polyphosphoinositide phosphatase (907 aa).

An SAC domain is found at 154–547 (FQNVDLSSNF…GDTLSLQYGG (394 aa)). Residues 707-788 (GIDPSPFTVR…VKMTDAGDSA (82 aa)) are disordered. Acidic residues predominate over residues 758 to 770 (SEDDSGTDREEEG).

Component of the PI(3,5)P2 regulatory complex/PAS complex, at least composed of PIKFYVE, FIG4 and VAC14. VAC14 nucleates the assembly of the complex and serves as a scaffold by pentamerizing into a star-shaped structure, which can bind a single copy each of PIKFYVE and FIG4 and coordinates their activities.

Its subcellular location is the endosome membrane. It catalyses the reaction a 1,2-diacyl-sn-glycero-3-phospho-(1D-myo-inositol-3,5-bisphosphate) + H2O = a 1,2-diacyl-sn-glycero-3-phospho-(1D-myo-inositol-3-phosphate) + phosphate. The catalysed reaction is a 1,2-diacyl-sn-glycero-3-phospho-(1D-myo-inositol-4,5-bisphosphate) + H2O = a 1,2-diacyl-sn-glycero-3-phospho-(1D-myo-inositol 4-phosphate) + phosphate. It carries out the reaction a 1,2-diacyl-sn-glycero-3-phospho-(1D-myo-inositol-3,4,5-trisphosphate) + H2O = a 1,2-diacyl-sn-glycero-3-phospho-(1D-myo-inositol-3,4-bisphosphate) + phosphate. The enzyme catalyses O-phospho-L-seryl-[protein] + H2O = L-seryl-[protein] + phosphate. Dual specificity phosphatase component of the PI(3,5)P2 regulatory complex which regulates both the synthesis and turnover of phosphatidylinositol 3,5-bisphosphate (PtdIns(3,5)P2). Catalyzes the dephosphorylation of phosphatidylinositol 3,5-bisphosphate (PtdIns(3,5)P2) to form phosphatidylinositol 3-phosphate. Has serine-protein phosphatase activity acting on PIKfyve to stimulate its lipid kinase activity, its catalytically activity being required for maximal PI(3,5)P2 production. In vitro, hydrolyzes all three D5-phosphorylated polyphosphoinositide and although displaying preferences for PtdIns(3,5)P2, it is capable of hydrolyzing PtdIns(3,4,5)P3 and PtdIns(4,5)P2, at least in vitro. The chain is Polyphosphoinositide phosphatase from Homo sapiens (Human).